A 311-amino-acid chain; its full sequence is tRNA-cytidine(32) 2-sulfurtransferase (311 aa).

A PP-loop motif motif is present at residues 47-52; that stretch reads SGGKDS. Cys122, Cys125, and Cys213 together coordinate [4Fe-4S] cluster.

The protein belongs to the TtcA family. Homodimer. Mg(2+) is required as a cofactor. Requires [4Fe-4S] cluster as cofactor.

The protein localises to the cytoplasm. It carries out the reaction cytidine(32) in tRNA + S-sulfanyl-L-cysteinyl-[cysteine desulfurase] + AH2 + ATP = 2-thiocytidine(32) in tRNA + L-cysteinyl-[cysteine desulfurase] + A + AMP + diphosphate + H(+). Its pathway is tRNA modification. In terms of biological role, catalyzes the ATP-dependent 2-thiolation of cytidine in position 32 of tRNA, to form 2-thiocytidine (s(2)C32). The sulfur atoms are provided by the cysteine/cysteine desulfurase (IscS) system. This is tRNA-cytidine(32) 2-sulfurtransferase from Klebsiella pneumoniae (strain 342).